We begin with the raw amino-acid sequence, 439 residues long: MPKPIVAIVGRPNVGKSTLFNRIVGARIAIVEDMPGVTRDRLYQDAEWQGREFTLVDTGGLDFAEDIITAQIRKQAELAIYEADIILFVVDAREGLTAIDEEVGRTLRRADKPVILVANKVEHFDKIPYYDFYQLGLGDPVPVSAAEGLNTGDLLDELVKNLPAQDEDPYPPDTIRIAVIGRPNVGKSSLVNTILGEERVIVSNIPGTTRDAIDSSFEKNGKNYVLVDTAGMRRRKKIDLPTERYSVVRALRAVDRCDVALMVFDATEGIAEQDKRIVGYAHEKGKAIILIINKWDLIEKDDKTMNRFEKKIREELAFLDYVPTLYISALTKQRVPKVLETVDFVAEEASKRVATADLNNLIREATQHNPPPADKHRRLKIFYATQGGVKPPTFILFVNEPEIMHFSYQRYLENKIRDTYGFKGTPIRFFLRKREGKDI.

EngA-type G domains lie at 4–166 (PIVA…PAQD) and 175–350 (IRIA…EEAS). Residues 10 to 17 (GRPNVGKS), 57 to 61 (DTGGL), 119 to 122 (NKVE), 181 to 188 (GRPNVGKS), 228 to 232 (DTAGM), and 293 to 296 (NKWD) contribute to the GTP site. In terms of domain architecture, KH-like spans 351–435 (KRVATADLNN…PIRFFLRKRE (85 aa)).

Belongs to the TRAFAC class TrmE-Era-EngA-EngB-Septin-like GTPase superfamily. EngA (Der) GTPase family. In terms of assembly, associates with the 50S ribosomal subunit.

Its function is as follows. GTPase that plays an essential role in the late steps of ribosome biogenesis. In Desulforamulus reducens (strain ATCC BAA-1160 / DSM 100696 / MI-1) (Desulfotomaculum reducens), this protein is GTPase Der.